A 261-amino-acid chain; its full sequence is 4-hydroxy-tetrahydrodipicolinate reductase (261 aa).

Residues 11–16 (GFMGAM), 96–98 (GTT), and 122–125 (APNF) contribute to the NAD(+) site. His-152 acts as the Proton donor/acceptor in catalysis. His-153 contacts (S)-2,3,4,5-tetrahydrodipicolinate. Lys-156 serves as the catalytic Proton donor. 162-163 (GT) is a binding site for (S)-2,3,4,5-tetrahydrodipicolinate.

Belongs to the DapB family.

The protein resides in the cytoplasm. It carries out the reaction (S)-2,3,4,5-tetrahydrodipicolinate + NAD(+) + H2O = (2S,4S)-4-hydroxy-2,3,4,5-tetrahydrodipicolinate + NADH + H(+). It catalyses the reaction (S)-2,3,4,5-tetrahydrodipicolinate + NADP(+) + H2O = (2S,4S)-4-hydroxy-2,3,4,5-tetrahydrodipicolinate + NADPH + H(+). Its pathway is amino-acid biosynthesis; L-lysine biosynthesis via DAP pathway; (S)-tetrahydrodipicolinate from L-aspartate: step 4/4. Functionally, catalyzes the conversion of 4-hydroxy-tetrahydrodipicolinate (HTPA) to tetrahydrodipicolinate. The chain is 4-hydroxy-tetrahydrodipicolinate reductase from Lactobacillus helveticus (strain DPC 4571).